The following is a 436-amino-acid chain: POU domain, class 2, transcription factor 3 (436 aa).

Disordered stretches follow at residues 1–40 (MVNL…NGLD), 140–186 (QTGP…DEPS), and 256–278 (AESS…SEVF). The region spanning 183–257 (DEPSDLEELE…LLEKWLNDAE (75 aa)) is the POU-specific domain. Residues 258–275 (SSPSDPSVSTPSSYPSLS) are compositionally biased toward low complexity. Residues 281 to 340 (KRKKRTSIETNIRLTLEKRFQDNPKPSSEEISMIAEQLSMEKEVVRVWFCNRRQKEKRIN) constitute a DNA-binding region (homeobox). The tract at residues 363–421 (LGPLSVPPVHSTMPGTVTSSCSPGNNSRPSSPGSGLHASSPTASQNNSKAAVNSASSFN) is disordered. 2 stretches are compositionally biased toward low complexity: residues 381 to 397 (SSCS…PGSG) and 405 to 421 (ASQN…SSFN).

The protein belongs to the POU transcription factor family. Class-2 subfamily. Interacts (via the POU domain) with POU2AF1 and POU2AF2 in a DNA-dependent manner; this interaction recruits POU2AF2 to chromatin and increases POU2F3 transactivation activity. In terms of tissue distribution, specifically expressed in epidermis and cultured keratinocytes.

It localises to the nucleus. In terms of biological role, transcription factor that binds to the octamer motif (5'-ATTTGCAT-3') and regulates cell type-specific differentiation pathways. Involved in the regulation of keratinocytes differentiation. The POU2F3-POU2AF2/POU2AF3 complex drives the expression of tuft-cell-specific genes, a rare chemosensory cells that coordinate immune and neural functions within mucosal epithelial tissues. The protein is POU domain, class 2, transcription factor 3 of Homo sapiens (Human).